Here is a 501-residue protein sequence, read N- to C-terminus: Cytochrome P450 90A4 (501 aa).

The helical transmembrane segment at 2-22 (AAAALLLLAAAAAAVVVAMAL) threads the bilayer. C446 provides a ligand contact to heme.

The protein belongs to the cytochrome P450 family. Requires heme as cofactor.

The protein localises to the membrane. Its pathway is plant hormone biosynthesis; brassinosteroid biosynthesis. Functionally, catalyzes the C23-alpha-hydroxylation step in brassinosteroid biosynthesis. Converts 6-deoxocathasterone to 6-deoxoteasterone in the late C6-oxidation pathway and cathasterone to teasterone (TE) in the early C6-oxidation pathway of brassinolide (BL) biosynthesis. The protein is Cytochrome P450 90A4 of Oryza sativa subsp. indica (Rice).